Here is a 382-residue protein sequence, read N- to C-terminus: Cysteine desulfurase IscS 1 (382 aa).

Asn-149 contributes to the pyridoxal 5'-phosphate binding site. The active-site Cysteine persulfide intermediate is Cys-321. Cys-321 provides a ligand contact to [2Fe-2S] cluster.

The protein belongs to the class-V pyridoxal-phosphate-dependent aminotransferase family. NifS/IscS subfamily. Homodimer. Forms a heterotetramer with IscU, interacts with other sulfur acceptors. Pyridoxal 5'-phosphate is required as a cofactor.

Its subcellular location is the cytoplasm. It carries out the reaction (sulfur carrier)-H + L-cysteine = (sulfur carrier)-SH + L-alanine. It functions in the pathway cofactor biosynthesis; iron-sulfur cluster biosynthesis. In terms of biological role, master enzyme that delivers sulfur to a number of partners involved in Fe-S cluster assembly, tRNA modification or cofactor biosynthesis. Catalyzes the removal of elemental sulfur atoms from cysteine to produce alanine. Functions as a sulfur delivery protein for Fe-S cluster synthesis onto IscU, an Fe-S scaffold assembly protein, as well as other S acceptor proteins. This is Cysteine desulfurase IscS 1 from Archaeoglobus fulgidus (strain ATCC 49558 / DSM 4304 / JCM 9628 / NBRC 100126 / VC-16).